The primary structure comprises 160 residues: uncharacterized protein (160 aa).

A helical transmembrane segment spans residues 27-47 (VMNSYFIAGCGPAVCYYAVSW).

It is found in the membrane. This is an uncharacterized protein from Homo sapiens (Human).